The following is a 641-amino-acid chain: Leucine-rich repeat receptor-like serine/threonine/tyrosine-protein kinase SOBIR1 (641 aa).

An N-terminal signal peptide occupies residues 1–31 (MAVPTGSANLFLRPLILAVLSFLLLSSFVSS). Residues 32–284 (VEWLDIDSSD…KKKKSKKKKV (253 aa)) are Extracellular-facing. 5 LRR repeats span residues 112 to 133 (ELKE…DILS), 136 to 159 (QLEV…SSLS), 160 to 182 (RLRI…KNLR), 183 to 205 (NLEN…IVSF), and 207 to 228 (NLRF…VMSS). N-linked (GlcNAc...) asparagine glycosylation occurs at Asn154. N-linked (GlcNAc...) asparagine glycosylation occurs at Asn186. Residues 243–278 (AETPTSSPTNKPNNSTTSKAPKGAPKPGKLKKKKKK) form a disordered region. Residues 245–259 (TPTSSPTNKPNNSTT) are compositionally biased toward polar residues. Asn256 carries N-linked (GlcNAc...) asparagine glycosylation. A compositionally biased stretch (low complexity) spans 260 to 269 (SKAPKGAPKP). The chain crosses the membrane as a helical span at residues 285 to 305 (AAWILGFVVGAIGGTISGFVF). Residues 306–641 (SVLFKLIIQA…VRTMLSQIKH (336 aa)) lie on the Cytoplasmic side of the membrane. A Protein kinase domain is found at 347-641 (LASLEIIGRG…VRTMLSQIKH (295 aa)). Residues 353–361 (IGRGGCGEV) and Lys377 contribute to the ATP site. The Proton acceptor role is filled by Asp489.

Belongs to the protein kinase superfamily. Ser/Thr protein kinase family. As to quaternary structure, interacts with CST. Interacts with RLP23. Component of a trimeric complex composed of RLP23, SOBIR1 and BAK1. BAK1 is recruited into a pre-formed RLP23-SOBIR1 complex in a ligand-dependent manner. Post-translationally, autophosphorylated on Ser, Thr and Tyr residues. Mostly present in leaves and flowers, with increasing expression in older flowers.

The protein resides in the cell membrane. The enzyme catalyses L-seryl-[protein] + ATP = O-phospho-L-seryl-[protein] + ADP + H(+). The catalysed reaction is L-threonyl-[protein] + ATP = O-phospho-L-threonyl-[protein] + ADP + H(+). It carries out the reaction L-tyrosyl-[protein] + ATP = O-phospho-L-tyrosyl-[protein] + ADP + H(+). Functionally, dual specificity kinase acting on both serine/threonine- and tyrosine-containing substrates. Acting as a counterplayer of BIR1, promotes the activation of plant defense and cell death. Component of the RLP23-SOBIR1-BAK1 complex that mediates NLP-triggered immunity. Functions as an inhibitor/regulator of abscission, probably by regulating membrane trafficking during abscission. In Arabidopsis thaliana (Mouse-ear cress), this protein is Leucine-rich repeat receptor-like serine/threonine/tyrosine-protein kinase SOBIR1 (SOBIR1).